The primary structure comprises 260 residues: MSHHWGYGKHNGPEHWHKDFPIANGERQSPVDIDTKAVVQDPALKPLALVYGEATSRRMVNNGHSFNVEYDDSQDKAVLKDGPLTGTYRLVQFHFHWGSSDDQGSEHTVDRKKYAAELHLVHWNTKYGDFGTAAQQPDGLAVVGVFLKVGDANPALQKVLDALDSIKTKGKSTDFPNFDPGSLLPNVLDYWTYPGSLTTPPLLESVTWIVLKEPISVSSQQMLKFRTLNFNAEGEPELLMLANWRPAQPLKNRQVRGFPK.

Ser-2 is subject to N-acetylserine. A Phosphoserine modification is found at Ser-2. The region spanning 3-259 (HHWGYGKHNG…LKNRQVRGFP (257 aa)) is the Alpha-carbonic anhydrase domain. Catalysis depends on His-64, which acts as the Proton donor/acceptor. Positions 94, 96, and 119 each coordinate Zn(2+). A phosphoserine mark is found at Ser-165 and Ser-172. Residue 198–199 (TT) coordinates substrate.

It belongs to the alpha-carbonic anhydrase family. As to quaternary structure, interacts with SLC4A4. Interaction with SLC4A7 regulates SLC4A7 transporter activity. Zn(2+) serves as cofactor.

It is found in the cytoplasm. It localises to the cell membrane. The catalysed reaction is hydrogencarbonate + H(+) = CO2 + H2O. The enzyme catalyses urea = cyanamide + H2O. Inhibited by acetazolamide. Its function is as follows. Catalyzes the reversible hydration of carbon dioxide. Can also hydrate cyanamide to urea. Involved in the regulation of fluid secretion into the anterior chamber of the eye. Essential for bone resorption and osteoclast differentiation. Contributes to intracellular pH regulation in the duodenal upper villous epithelium during proton-coupled peptide absorption. Stimulates the chloride-bicarbonate exchange activity of SLC26A6. This chain is Carbonic anhydrase 2 (CA2), found in Bos taurus (Bovine).